We begin with the raw amino-acid sequence, 168 residues long: Protein OPG162 (168 aa).

Over 1 to 14 (MKSLNRQTVSMFKK) the chain is Intravirion. A helical transmembrane segment spans residues 15-37 (LSVPAAIMMILSTIISGIGTFLH). Residues 38-168 (YKEELMPSAC…SVLCVKKFYK (131 aa)) lie on the Virion surface side of the membrane. The C-type lectin domain maps to 54 to 163 (YDKHCYLDTN…CKSTQSVLCV (110 aa)). Disulfide bonds link Cys-75–Cys-162 and Cys-141–Cys-154. N-linked (GlcNAc...) asparagine; by host glycosylation occurs at Asn-133.

It belongs to the orthopoxvirus OPG162 protein family. Interacts with protein OPG161. Interacts with protein OPG164. Interacts with protein OPG190.

Its subcellular location is the virion membrane. It is found in the host Golgi apparatus. In terms of biological role, forms a complex with OPG162 and OPG190 to coordinate the incorporation of OPG164 into wrapped enveloped virion (EV) membranes and, subsequently, the production of actin tails. Therefore plays an essential role in efficient cell-to-cell spread of viral particles. In Homo sapiens (Human), this protein is Protein OPG162 (OPG162).